We begin with the raw amino-acid sequence, 567 residues long: 2-succinyl-5-enolpyruvyl-6-hydroxy-3-cyclohexene-1-carboxylate synthase (567 aa).

Belongs to the TPP enzyme family. MenD subfamily. Homodimer. The cofactor is Mg(2+). It depends on Mn(2+) as a cofactor. Thiamine diphosphate serves as cofactor.

It catalyses the reaction isochorismate + 2-oxoglutarate + H(+) = 5-enolpyruvoyl-6-hydroxy-2-succinyl-cyclohex-3-ene-1-carboxylate + CO2. It functions in the pathway quinol/quinone metabolism; 1,4-dihydroxy-2-naphthoate biosynthesis; 1,4-dihydroxy-2-naphthoate from chorismate: step 2/7. Its pathway is quinol/quinone metabolism; menaquinone biosynthesis. Catalyzes the thiamine diphosphate-dependent decarboxylation of 2-oxoglutarate and the subsequent addition of the resulting succinic semialdehyde-thiamine pyrophosphate anion to isochorismate to yield 2-succinyl-5-enolpyruvyl-6-hydroxy-3-cyclohexene-1-carboxylate (SEPHCHC). In Yersinia pseudotuberculosis serotype I (strain IP32953), this protein is 2-succinyl-5-enolpyruvyl-6-hydroxy-3-cyclohexene-1-carboxylate synthase.